The following is a 90-amino-acid chain: Auxin-responsive protein SAUR19 (90 aa).

It belongs to the ARG7 family. Interacts with and inhibits PP2C-D subfamily of type 2C phosphatases such as PP2C67/PP2C-D1, PP2C64/PP2C-D5 and PP2C46/PP2C-D6.

The protein resides in the cell membrane. In terms of biological role, provide a mechanistic link between auxin and plasma membrane H(+)-ATPases (PM H(+)-ATPases, e.g. AHA1 and AHA2), and triggers PM H(+)-ATPases activity by promoting phosphorylation of their C-terminal autoinhibitory domain as a result of PP2C-D subfamily of type 2C phosphatases inhibition, thus leading to the acidification of the apoplast and the facilitation of solutes and water uptake to drive cell expansion. Prevents the apical hook maintenance of etiolated seedlings. Functions as positive effectors of cell expansion through modulation of auxin transport. In Arabidopsis thaliana (Mouse-ear cress), this protein is Auxin-responsive protein SAUR19.